A 150-amino-acid chain; its full sequence is uncharacterized protein (150 aa).

This is an uncharacterized protein from Streptomyces lincolnensis.